Here is a 597-residue protein sequence, read N- to C-terminus: 66 kDa protein (597 aa).

Disordered stretches follow at residues 62–82, 160–198, 218–315, 329–411, and 535–586; these read VRLQ…PSLQ, HSVP…FRQH, NQLA…SCRV, HFKS…LHHD, and SSPQ…ASAL. Residues 64 to 80 are compositionally biased toward polar residues; the sequence is LQSSPPRGPQSDRNLPS. A compositionally biased stretch (polar residues) spans 218-234; the sequence is NQLAQAQQHPLPSSKPL. The span at 273–291 shows a compositional bias: low complexity; sequence PSSRGHLPSSTSSSSPRSN. Polar residues predominate over residues 305–315; sequence SNSQDLRSCRV. The segment covering 389 to 400 has biased composition (basic residues); that stretch reads QTHHARLPHSKR. Low complexity predominate over residues 535–574; sequence SSPQSHSSESLRGDSPPSSHLPSSPSSACSGDSFASCSSF. Over residues 575 to 584 the composition is skewed to polar residues; sequence GPSNPTSSAS.

This sequence belongs to the tymoviridae protein p69 family.

This is 66 kDa protein from Ononis.